The following is a 291-amino-acid chain: Taste receptor type 2 member 16 (291 aa).

A topological domain (extracellular) is located at residue Met1. Residues 2-22 traverse the membrane as a helical segment; that stretch reads IPIQLTVFFMIIYVLESLTII. At 23–41 the chain is on the cytoplasmic side; the sequence is VQSSLIVAVLGREWLQVRR. Residues 42–62 traverse the membrane as a helical segment; sequence LMPVDMILISLGISRFCLQWA. The Extracellular segment spans residues 63–84; it reads SMLNBFCSYFNLNYVLCNLTIT. Asn80 carries N-linked (GlcNAc...) asparagine glycosylation. The helical transmembrane segment at 85–105 threads the bilayer; it reads WEFFNILTFWLNSLLTVFYCI. Topologically, residues 106 to 125 are cytoplasmic; that stretch reads KVSSFTHHIFLWLRWRILRL. The chain crosses the membrane as a helical span at residues 126-146; that stretch reads FPWILLGSLMITCVTIIPSAI. The Extracellular portion of the chain corresponds to 147 to 182; that stretch reads GNYIQIQLLTMEHLPRNSTVTDKLEKFHQYEFQAHT. Asn163 is a glycosylation site (N-linked (GlcNAc...) asparagine). Residues 183–203 traverse the membrane as a helical segment; that stretch reads VALVIPFILFLASTILLMASL. The Cytoplasmic portion of the chain corresponds to 204–228; that stretch reads TKQIQHHSTGHCNPSMKAHFTALRS. Residues 229–249 form a helical membrane-spanning segment; that stretch reads LAVLFIVFTSYFLTILITIIG. At 250–257 the chain is on the extracellular side; sequence TLFDRRCW. The chain crosses the membrane as a helical span at residues 258–278; it reads LWVWEAFVYAFILMHSTSLML. Over 279-291 the chain is Cytoplasmic; it reads SSPTLKRILKGKC.

Belongs to the G-protein coupled receptor T2R family. As to quaternary structure, interacts with RTP3 and RTP4.

The protein resides in the cell membrane. Functionally, receptor that may play a role in the perception of bitterness and is gustducin-linked. May play a role in sensing the chemical composition of the gastrointestinal content. The activity of this receptor may stimulate alpha gustducin, mediate PLC-beta-2 activation and lead to the gating of TRPM5. This chain is Taste receptor type 2 member 16 (TAS2R16), found in Gorilla gorilla gorilla (Western lowland gorilla).